We begin with the raw amino-acid sequence, 469 residues long: Sorting and assembly machinery component 50 homolog (469 aa).

Residues M1–G20 are disordered. The POTRA domain occupies V45–L125. An N6-methyllysine modification is found at K255.

It belongs to the SAM50/omp85 family. In terms of assembly, associates with the mitochondrial contact site and cristae organizing system (MICOS) complex, composed of at least MICOS10/MIC10, CHCHD3/MIC19, CHCHD6/MIC25, APOOL/MIC27, IMMT/MIC60, APOO/MIC23/MIC26 and QIL1/MIC13. This complex was also known under the names MINOS or MitOS complex. The MICOS complex associates with mitochondrial outer membrane proteins SAMM50, MTX1 and MTX2 (together described as components of the mitochondrial outer membrane sorting assembly machinery (SAM) complex) and DNAJC11, mitochondrial inner membrane protein TMEM11 and with HSPA9. The MICOS and SAM complexes together with DNAJC11 are part of a large protein complex spanning both membranes termed the mitochondrial intermembrane space bridging (MIB) complex. Interacts with CHCHD3/MIC19. Interacts with ARMC1. As to quaternary structure, (Microbial infection) Interacts with parasite T.gondii RH strain MAF1b1; the interaction is probably indirect and results in the disruption of the MIB complex and the formation of SPOTs (structures positive for outer mitochondrial membrane (OMM)), a cellular response to OMM stress, which leads to the constitutive shedding of OMM vesicles.

The protein localises to the mitochondrion outer membrane. It localises to the cytoplasm. It is found in the mitochondrion. Plays a crucial role in the maintenance of the structure of mitochondrial cristae and the proper assembly of the mitochondrial respiratory chain complexes. Required for the assembly of TOMM40 into the TOM complex. The protein is Sorting and assembly machinery component 50 homolog (SAMM50) of Homo sapiens (Human).